Reading from the N-terminus, the 196-residue chain is Large ribosomal subunit protein eL15 (196 aa).

2 disordered regions span residues 72-93 and 163-196; these read SARK…TRIT and GLTG…GKGK.

It belongs to the eukaryotic ribosomal protein eL15 family. Part of the 50S ribosomal subunit. Interacts with protein L7Ae and weakly with L44e.

This chain is Large ribosomal subunit protein eL15 (rpl15e), found in Haloarcula marismortui (strain ATCC 43049 / DSM 3752 / JCM 8966 / VKM B-1809) (Halobacterium marismortui).